A 124-amino-acid polypeptide reads, in one-letter code: Small ribosomal subunit protein uS12 (124 aa).

The residue at position 89 (Asp-89) is a 3-methylthioaspartic acid. The interval 104–124 is disordered; the sequence is SAGVQNRNRGRSKYGTKRPKK. Over residues 111-124 the composition is skewed to basic residues; sequence NRGRSKYGTKRPKK.

It belongs to the universal ribosomal protein uS12 family. As to quaternary structure, part of the 30S ribosomal subunit. Contacts proteins S8 and S17. May interact with IF1 in the 30S initiation complex.

Its function is as follows. With S4 and S5 plays an important role in translational accuracy. In terms of biological role, interacts with and stabilizes bases of the 16S rRNA that are involved in tRNA selection in the A site and with the mRNA backbone. Located at the interface of the 30S and 50S subunits, it traverses the body of the 30S subunit contacting proteins on the other side and probably holding the rRNA structure together. The combined cluster of proteins S8, S12 and S17 appears to hold together the shoulder and platform of the 30S subunit. This is Small ribosomal subunit protein uS12 from Pelotomaculum thermopropionicum (strain DSM 13744 / JCM 10971 / SI).